A 155-amino-acid chain; its full sequence is Deoxyuridine 5'-triphosphate nucleotidohydrolase (155 aa).

Substrate is bound by residues 74-76 (RSG), asparagine 87, and 91-93 (TID).

Belongs to the dUTPase family. Mg(2+) is required as a cofactor.

The catalysed reaction is dUTP + H2O = dUMP + diphosphate + H(+). Its pathway is pyrimidine metabolism; dUMP biosynthesis; dUMP from dCTP (dUTP route): step 2/2. This enzyme is involved in nucleotide metabolism: it produces dUMP, the immediate precursor of thymidine nucleotides and it decreases the intracellular concentration of dUTP so that uracil cannot be incorporated into DNA. The chain is Deoxyuridine 5'-triphosphate nucleotidohydrolase from Cereibacter sphaeroides (strain ATCC 17023 / DSM 158 / JCM 6121 / CCUG 31486 / LMG 2827 / NBRC 12203 / NCIMB 8253 / ATH 2.4.1.) (Rhodobacter sphaeroides).